The primary structure comprises 80 residues: UPF0125 protein PD_1376 (80 aa).

Belongs to the UPF0125 (RnfH) family.

This chain is UPF0125 protein PD_1376, found in Xylella fastidiosa (strain Temecula1 / ATCC 700964).